Consider the following 387-residue polypeptide: Pepsin II-2/3 (387 aa).

Residues 1-15 (MKWLLLLGLLALSEC) form the signal peptide. A propeptide spans 16–59 (IVHKVPLVRKKSLRKNLIEKGLLQDYLKTHTPNPATKYFPKETF) (activation peptide). One can recognise a Peptidase A1 domain in the interval 75–384 (YFGTISIGTP…DRANNQLGLA (310 aa)). Asp93 is a catalytic residue. Cys106 and Cys111 are disulfide-bonded. Ser129 is subject to Phosphoserine. A disulfide bond links Cys267 and Cys271. Asp276 is an active-site residue. A disulfide bond links Cys310 and Cys343.

The protein belongs to the peptidase A1 family.

Its subcellular location is the secreted. The enzyme catalyses Preferential cleavage: hydrophobic, preferably aromatic, residues in P1 and P1' positions. Cleaves 1-Phe-|-Val-2, 4-Gln-|-His-5, 13-Glu-|-Ala-14, 14-Ala-|-Leu-15, 15-Leu-|-Tyr-16, 16-Tyr-|-Leu-17, 23-Gly-|-Phe-24, 24-Phe-|-Phe-25 and 25-Phe-|-Tyr-26 bonds in the B chain of insulin.. Functionally, shows particularly broad specificity; although bonds involving phenylalanine and leucine are preferred, many others are also cleaved to some extent. This chain is Pepsin II-2/3, found in Oryctolagus cuniculus (Rabbit).